The primary structure comprises 183 residues: Tetrahydromethanopterin S-methyltransferase subunit A 2 (183 aa).

Residues 1–101 are Cytoplasmic-facing; it reads MFLMVEKKPV…TMKALHSNGV (101 aa). Residue His87 coordinates 5-hydroxybenzimidazolylcob(I)amide. The helical transmembrane segment at 102–118 threads the bilayer; sequence DLETGRIIGATGAIPYI. Residues 119–183 lie on the Extracellular side of the membrane; sequence ENMPEEAIER…IGKGDSEENT (65 aa).

Belongs to the MtrA family. In terms of assembly, the complex is composed of 8 subunits; MtrA, MtrB, MtrC, MtrD, MtrE, MtrF, MtrG and MtrH. 5-hydroxybenzimidazolylcob(I)amide serves as cofactor.

The protein localises to the cell membrane. It carries out the reaction 5-methyl-5,6,7,8-tetrahydromethanopterin + coenzyme M + 2 Na(+)(in) = 5,6,7,8-tetrahydromethanopterin + methyl-coenzyme M + 2 Na(+)(out). It participates in one-carbon metabolism; methanogenesis from CO(2); methyl-coenzyme M from 5,10-methylene-5,6,7,8-tetrahydromethanopterin: step 2/2. Functionally, part of a complex that catalyzes the formation of methyl-coenzyme M and tetrahydromethanopterin from coenzyme M and methyl-tetrahydromethanopterin. This is an energy-conserving, sodium-ion translocating step. In Methanothermobacter thermautotrophicus (strain ATCC 29096 / DSM 1053 / JCM 10044 / NBRC 100330 / Delta H) (Methanobacterium thermoautotrophicum), this protein is Tetrahydromethanopterin S-methyltransferase subunit A 2.